The chain runs to 233 residues: MSVISMKQLLEAGVHFGHQTRRWNPKMAPYIFTERNGIYIIDLQKTVKKVEEAYNFLRSVAEEGKDVLFVGTKKQAQEAIEEEAKRSEMHFVNNRWLGGMLTNFTTITARINKLEELDKMEEDGTFEVLPKKEVIKLKNEREKLEKNLGGIRKLDANNVGAMFIVDPRKEKNAILEAKRLGIPVVAIVDTNCDPDEVDFVIPGNDDAIRAVRLIAAKMADAVLEGRQGEQLAE.

It belongs to the universal ribosomal protein uS2 family.

This Clostridium botulinum (strain Hall / ATCC 3502 / NCTC 13319 / Type A) protein is Small ribosomal subunit protein uS2.